The chain runs to 128 residues: Glycophorin-C (128 aa).

The span at 1–12 shows a compositional bias: polar residues; sequence MWSTRSPNSTAW. Residues 1-48 form a disordered region; that stretch reads MWSTRSPNSTAWPLSLEPDPGMASASTTMHTTTIAEPDPGMSGWPDGR. Over 1-57 the chain is Extracellular; sequence MWSTRSPNSTAWPLSLEPDPGMASASTTMHTTTIAEPDPGMSGWPDGRMETSTPTIM. Serine 3 carries an O-linked (GalNAc...) serine glycan. Threonine 4 carries O-linked (GalNAc...) threonine glycosylation. A glycan (O-linked (GalNAc...) serine) is linked at serine 6. Asparagine 8 carries N-linked (GlcNAc...) asparagine glycosylation. The O-linked (GalNAc...) serine glycan is linked to serine 9. An O-linked (GalNAc...) threonine glycan is attached at threonine 10. Serine 15, serine 24, and serine 26 each carry an O-linked (GalNAc...) serine glycan. Residues 22 to 33 are compositionally biased toward low complexity; the sequence is MASASTTMHTTT. O-linked (GalNAc...) threonine glycosylation is found at threonine 27, threonine 28, threonine 31, threonine 32, and threonine 33. Serine 42 carries an O-linked (GalNAc...) serine glycan. A helical; Signal-anchor for type III membrane protein transmembrane segment spans residues 58–81; sequence DIVVIAGVIAAVAIVLVSLLFVML. Over 82–128 the chain is Cytoplasmic; the sequence is RYMYRHKGTYHTNEAKGTEFAESADAALQGDPALQDAGDSSRKEYFI. Serine 104 and serine 122 each carry phosphoserine. The tract at residues 108 to 128 is disordered; that stretch reads ALQGDPALQDAGDSSRKEYFI.

Belongs to the glycophorin-C family. Post-translationally, O-glycosylated with core 1 or possibly core 8 glycans. As to expression, glycophorin-C is expressed in erythrocytes. Glycophorin-D and IsoGPC are ubiquitously expressed.

The protein resides in the cell membrane. Its function is as follows. This protein is a minor sialoglycoprotein in human erythrocyte membranes. The blood group Gerbich antigens and receptors for Plasmodium falciparum merozoites are most likely located within the extracellular domain. Glycophorin-C plays an important role in regulating the stability of red cells. In Homo sapiens (Human), this protein is Glycophorin-C (GYPC).